We begin with the raw amino-acid sequence, 330 residues long: Pantothenate kinase (330 aa).

ATP is bound at residue 108 to 115 (GSVAVGKS).

Belongs to the prokaryotic pantothenate kinase family.

Its subcellular location is the cytoplasm. It catalyses the reaction (R)-pantothenate + ATP = (R)-4'-phosphopantothenate + ADP + H(+). It functions in the pathway cofactor biosynthesis; coenzyme A biosynthesis; CoA from (R)-pantothenate: step 1/5. This Allorhizobium ampelinum (strain ATCC BAA-846 / DSM 112012 / S4) (Agrobacterium vitis (strain S4)) protein is Pantothenate kinase.